We begin with the raw amino-acid sequence, 360 residues long: Photosystem II protein D1 (360 aa).

Helical transmembrane passes span 29–46 (YIGWFGVLMFPLLLTATT), 118–133 (HFLLGVACYMGREWEL), and 142–156 (WIAVAYSAPVAAATA). His118 is a chlorophyll a binding site. Residue Tyr126 coordinates pheophytin a. [CaMn4O5] cluster is bound by residues Asp170 and Glu189. A helical transmembrane segment spans residues 197–218 (FHMMGVAGVFGGSLFSAMHGSL). His198 contacts chlorophyll a. A quinone is bound by residues His215 and 264–265 (SF). His215 lines the Fe cation pocket. His272 contacts Fe cation. Residues 274–288 (FLALWPVVGIWFTAL) form a helical membrane-spanning segment. [CaMn4O5] cluster is bound by residues His332, Glu333, Asp342, and Ala344. Positions 345 to 360 (SGEVMPVALTAPSINA) are excised as a propeptide.

Belongs to the reaction center PufL/M/PsbA/D family. PSII is composed of 1 copy each of membrane proteins PsbA, PsbB, PsbC, PsbD, PsbE, PsbF, PsbH, PsbI, PsbJ, PsbK, PsbL, PsbM, PsbT, PsbX, PsbY, PsbZ, Psb30/Ycf12, at least 3 peripheral proteins of the oxygen-evolving complex and a large number of cofactors. It forms dimeric complexes. Requires The D1/D2 heterodimer binds P680, chlorophylls that are the primary electron donor of PSII, and subsequent electron acceptors. It shares a non-heme iron and each subunit binds pheophytin, quinone, additional chlorophylls, carotenoids and lipids. D1 provides most of the ligands for the Mn4-Ca-O5 cluster of the oxygen-evolving complex (OEC). There is also a Cl(-1) ion associated with D1 and D2, which is required for oxygen evolution. The PSII complex binds additional chlorophylls, carotenoids and specific lipids. as cofactor. Tyr-161 forms a radical intermediate that is referred to as redox-active TyrZ, YZ or Y-Z. Post-translationally, C-terminally processed by CTPA; processing is essential to allow assembly of the oxygen-evolving complex and thus photosynthetic growth.

The protein resides in the plastid. It is found in the cyanelle thylakoid membrane. The enzyme catalyses 2 a plastoquinone + 4 hnu + 2 H2O = 2 a plastoquinol + O2. Functionally, photosystem II (PSII) is a light-driven water:plastoquinone oxidoreductase that uses light energy to abstract electrons from H(2)O, generating O(2) and a proton gradient subsequently used for ATP formation. It consists of a core antenna complex that captures photons, and an electron transfer chain that converts photonic excitation into a charge separation. The D1/D2 (PsbA/PsbD) reaction center heterodimer binds P680, the primary electron donor of PSII as well as several subsequent electron acceptors. The protein is Photosystem II protein D1 of Cyanophora paradoxa.